The following is a 185-amino-acid chain: Ribosome-recycling factor (185 aa).

It belongs to the RRF family.

The protein localises to the cytoplasm. In terms of biological role, responsible for the release of ribosomes from messenger RNA at the termination of protein biosynthesis. May increase the efficiency of translation by recycling ribosomes from one round of translation to another. The sequence is that of Ribosome-recycling factor from Shewanella sediminis (strain HAW-EB3).